The primary structure comprises 160 residues: ATP synthase subunit b, chloroplastic (160 aa).

Residues 12 to 31 traverse the membrane as a helical segment; that stretch reads NVINIAILVVILIRFARQVV.

The protein belongs to the ATPase B chain family. As to quaternary structure, F-type ATPases have 2 components, F(1) - the catalytic core - and F(0) - the membrane proton channel. F(1) has five subunits: alpha(3), beta(3), gamma(1), delta(1), epsilon(1). F(0) has four main subunits: a(1), b(1), b'(1) and c(10-14). The alpha and beta chains form an alternating ring which encloses part of the gamma chain. F(1) is attached to F(0) by a central stalk formed by the gamma and epsilon chains, while a peripheral stalk is formed by the delta, b and b' chains.

The protein resides in the plastid. The protein localises to the chloroplast thylakoid membrane. Its function is as follows. F(1)F(0) ATP synthase produces ATP from ADP in the presence of a proton or sodium gradient. F-type ATPases consist of two structural domains, F(1) containing the extramembraneous catalytic core and F(0) containing the membrane proton channel, linked together by a central stalk and a peripheral stalk. During catalysis, ATP synthesis in the catalytic domain of F(1) is coupled via a rotary mechanism of the central stalk subunits to proton translocation. In terms of biological role, component of the F(0) channel, it forms part of the peripheral stalk, linking F(1) to F(0). The protein is ATP synthase subunit b, chloroplastic of Cyanidioschyzon merolae (strain NIES-3377 / 10D) (Unicellular red alga).